Here is an 89-residue protein sequence, read N- to C-terminus: Small ribosomal subunit protein uS15 (89 aa).

The protein belongs to the universal ribosomal protein uS15 family. As to quaternary structure, part of the 30S ribosomal subunit. Forms a bridge to the 50S subunit in the 70S ribosome, contacting the 23S rRNA.

One of the primary rRNA binding proteins, it binds directly to 16S rRNA where it helps nucleate assembly of the platform of the 30S subunit by binding and bridging several RNA helices of the 16S rRNA. Its function is as follows. Forms an intersubunit bridge (bridge B4) with the 23S rRNA of the 50S subunit in the ribosome. In Lactiplantibacillus plantarum (strain ATCC BAA-793 / NCIMB 8826 / WCFS1) (Lactobacillus plantarum), this protein is Small ribosomal subunit protein uS15.